The primary structure comprises 1426 residues: Ferlin 2 (1426 aa).

5 C2 domains span residues Met1–Lys111, Arg161–Phe279, Glu512–Thr638, Ser1031–Met1154, and Lys1189–Ser1318. Residues Ser1357–Gln1377 form a disordered region. Residues Pro1366 to Gln1377 show a composition bias toward basic and acidic residues. A helical membrane pass occupies residues Val1404–Leu1424.

The protein belongs to the ferlin family.

The protein resides in the membrane. The protein localises to the inner membrane complex. Its subcellular location is the cytoplasmic vesicle. It is found in the secretory vesicle. It localises to the rhoptry. Its function is as follows. Regulates rhoptry secretion. Required for completing the lytic cycle. Required for host cell invasion. Not required for microneme secretion and conoid extrusion. The protein is Ferlin 2 of Toxoplasma gondii.